Reading from the N-terminus, the 1161-residue chain is Voltage-gated inwardly rectifying potassium channel KCNH2 (1161 aa).

Over 1–405 (MPVRRGHVAP…RIHRWTILHY (405 aa)) the chain is Cytoplasmic. The region spanning 17 to 88 (TIIRKFEGQS…AAQIAQALLG (72 aa)) is the PAS domain. A PAC domain is found at 92-144 (RKVEIAFYRKDGSCFLCLVDVVPVKNEDGAVIMFILNFEVVMEKDMVGSPARD). Positions 233–286 (ALVGSCSPPPPVSAPGPHPSLRAHSLNPDASGSSCSLARTRSRESCASVRRASS) are disordered. Residues Ser239 and Ser245 each carry the phosphoserine modification. The span at 239–250 (SPPPPVSAPGPH) shows a compositional bias: pro residues. Residues 260 to 271 (PDASGSSCSLAR) show a composition bias toward polar residues. 4 positions are modified to phosphoserine: Ser285, Ser286, Ser322, and Ser353. The chain crosses the membrane as a helical span at residues 406–426 (SPFKAVWDWLILLLVIYTAVF). Residues 427 to 452 (TPYSAAFLLKETEEGPPAPECGYACQ) lie on the Extracellular side of the membrane. Residues 453 to 473 (PLAVVDLIVDIMFIVDILINF) form a helical membrane-spanning segment. The Cytoplasmic segment spans residues 474 to 497 (RTTYVNANEEVVSHPGRIAVHYFK). The chain crosses the membrane as a helical span at residues 498–518 (GWFLIDMVAAIPFDLLIFGSG). Residues 519 to 522 (SEEL) are Extracellular-facing. The helical; Voltage-sensor transmembrane segment at 523-543 (IGLLKTARLLRLVRVARKLDR) threads the bilayer. Residues 544-549 (YSEYGA) are Cytoplasmic-facing. The chain crosses the membrane as a helical span at residues 550-570 (AVLLLLMCTFALIAHWLACIW). The Extracellular portion of the chain corresponds to 571 to 613 (YAIGNMEQPHMDSRIGWLHNLGDQMGKPYNSSGLGGPSIKDKY). Asn600 carries an N-linked (GlcNAc...) asparagine glycan. Residues 614–634 (VTGLYFTFSSLTSVGFGNVSP) constitute an intramembrane region (pore-forming). Positions 626 to 631 (SVGFGN) match the Selectivity filter motif. Residues 635 to 640 (NTNSEK) lie on the Extracellular side of the membrane. Residues 641–661 (IFSICVMLIGSLMYASIFGNV) traverse the membrane as a helical segment. Residues 662–1161 (SAIIQRLYSG…LHRHGSDPGS (500 aa)) lie on the Cytoplasmic side of the membrane. The interval 744 to 844 (PFRGATKDCL…IHRDDLLEVL (101 aa)) is cNMP-binding domain. The segment at 872-985 (GSPGSTEWEG…TEDCEKSSDT (114 aa)) is disordered. Phosphoserine is present on residues Ser873 and Ser876. A compositionally biased stretch (basic residues) spans 885–894 (RQRKRKLSFR). The segment covering 930 to 941 (GESPSSGPSSPE) has biased composition (low complexity). The segment covering 962 to 972 (SPRPPGEPPGG) has biased composition (pro residues). Position 1016 is an omega-N-methylarginine (Arg1016). A coiled-coil region spans residues 1037 to 1064 (RGDVESRLDALQRQLNRLETRLSADMAT). Residues 1121 to 1161 (ELPPGAPELPQEGPTRRLSLPGQLGALTSQPLHRHGSDPGS) are disordered. Ser1139 is subject to Phosphoserine.

The protein belongs to the potassium channel family. H (Eag) (TC 1.A.1.20) subfamily. Kv11.1/KCNH2 sub-subfamily. The potassium channel is probably composed of a homo- or heterotetrameric complex of pore-forming alpha subunits that can associate with modulating beta subunits. Interacts with DNAJB12 and DNAJB14; chaperones DNAJB12 and DNAJB14 promote tetramerization. Heteromultimer with KCNH6/ERG2 and KCNH7/ERG3. Interacts with ALG10B. Forms a stable complex with KCNE1 or KCNE2, and that this heteromultimerization regulates Inward rectifier potassium channel activity. Interacts with CANX. The core-glycosylated, but not the fully glycosylated form interacts with RNF207. Interacts with NDFIP1 and NDFIP2; this interaction decreases the cell membrane expression by targeting KCNH2, through interaction with NEDD4L, for the degradation through the multivesicular bodies (MVBs)-lysosomal pathway. Post-translationally, phosphorylated on serine and threonine residues. Phosphorylation by PKA inhibits ion conduction. In terms of tissue distribution, detected in heart, both in atrium and in left ventricle.

Its subcellular location is the cell membrane. The catalysed reaction is K(+)(in) = K(+)(out). Its function is as follows. Pore-forming (alpha) subunit of voltage-gated inwardly rectifying potassium channel. Characterized by unusual gating kinetics by producing relatively small outward currents during membrane depolarization and large inward currents during subsequent repolarization which reflect a rapid inactivation during depolarization and quick recovery from inactivation but slow deactivation (closing) during repolarization. Channel properties are modulated by cAMP and subunit assembly. Forms a stable complex with KCNE1 or KCNE2, and that this heteromultimerization regulates inward rectifier potassium channel activity. The chain is Voltage-gated inwardly rectifying potassium channel KCNH2 from Oryctolagus cuniculus (Rabbit).